A 179-amino-acid polypeptide reads, in one-letter code: Large ribosomal subunit protein uL5 (179 aa).

This sequence belongs to the universal ribosomal protein uL5 family. In terms of assembly, part of the 50S ribosomal subunit; part of the 5S rRNA/L5/L18/L25 subcomplex. Contacts the 5S rRNA and the P site tRNA. Forms a bridge to the 30S subunit in the 70S ribosome.

In terms of biological role, this is one of the proteins that bind and probably mediate the attachment of the 5S RNA into the large ribosomal subunit, where it forms part of the central protuberance. In the 70S ribosome it contacts protein S13 of the 30S subunit (bridge B1b), connecting the 2 subunits; this bridge is implicated in subunit movement. Contacts the P site tRNA; the 5S rRNA and some of its associated proteins might help stabilize positioning of ribosome-bound tRNAs. The chain is Large ribosomal subunit protein uL5 from Burkholderia multivorans (strain ATCC 17616 / 249).